The primary structure comprises 126 residues: Small ribosomal subunit protein uS13 (126 aa).

The interval 92–126 (HRRGLPVRGQRTKTNARTRKGPKRTVAGKKKAGRK) is disordered.

Belongs to the universal ribosomal protein uS13 family. As to quaternary structure, part of the 30S ribosomal subunit. Forms a loose heterodimer with protein S19. Forms two bridges to the 50S subunit in the 70S ribosome.

In terms of biological role, located at the top of the head of the 30S subunit, it contacts several helices of the 16S rRNA. In the 70S ribosome it contacts the 23S rRNA (bridge B1a) and protein L5 of the 50S subunit (bridge B1b), connecting the 2 subunits; these bridges are implicated in subunit movement. Contacts the tRNAs in the A and P-sites. This Kineococcus radiotolerans (strain ATCC BAA-149 / DSM 14245 / SRS30216) protein is Small ribosomal subunit protein uS13.